The chain runs to 430 residues: Serine--tRNA ligase (430 aa).

237–239 (TAE) contacts L-serine. ATP is bound at residue 268-270 (RSE). Position 291 (E291) interacts with L-serine. Residue 355-358 (EISS) coordinates ATP. L-serine is bound at residue S391.

Belongs to the class-II aminoacyl-tRNA synthetase family. Type-1 seryl-tRNA synthetase subfamily. Homodimer. The tRNA molecule binds across the dimer.

The protein localises to the cytoplasm. It catalyses the reaction tRNA(Ser) + L-serine + ATP = L-seryl-tRNA(Ser) + AMP + diphosphate + H(+). The catalysed reaction is tRNA(Sec) + L-serine + ATP = L-seryl-tRNA(Sec) + AMP + diphosphate + H(+). It participates in aminoacyl-tRNA biosynthesis; selenocysteinyl-tRNA(Sec) biosynthesis; L-seryl-tRNA(Sec) from L-serine and tRNA(Sec): step 1/1. Functionally, catalyzes the attachment of serine to tRNA(Ser). Is also able to aminoacylate tRNA(Sec) with serine, to form the misacylated tRNA L-seryl-tRNA(Sec), which will be further converted into selenocysteinyl-tRNA(Sec). This chain is Serine--tRNA ligase, found in Klebsiella pneumoniae subsp. pneumoniae (strain ATCC 700721 / MGH 78578).